Reading from the N-terminus, the 162-residue chain is Probable chemoreceptor glutamine deamidase CheD 2 (162 aa).

It belongs to the CheD family.

It carries out the reaction L-glutaminyl-[protein] + H2O = L-glutamyl-[protein] + NH4(+). Its function is as follows. Probably deamidates glutamine residues to glutamate on methyl-accepting chemotaxis receptors (MCPs), playing an important role in chemotaxis. The sequence is that of Probable chemoreceptor glutamine deamidase CheD 2 from Geobacter metallireducens (strain ATCC 53774 / DSM 7210 / GS-15).